The primary structure comprises 378 residues: uncharacterized protein (378 aa).

The protein belongs to the mimivirus L17x/L18x family.

This is an uncharacterized protein from Acanthamoeba polyphaga (Amoeba).